Reading from the N-terminus, the 59-residue chain is Lantipeptide Flvbeta.f (59 aa).

Residues 1 to 27 (MEKMNNIAGITPENELDEMFDDSVVGA) constitute a propeptide, cleaved by FlvT. 2 positions are modified to 2,3-didehydrobutyrine; by FlvM2: T31 and T32. Cross-links (beta-methyllanthionine (Thr-Cys); by FlvM2) lie at residues 41–47 (TKNPQIC) and 53–56 (TVKC).

Contains DL-beta-methyllanthionine, when coepressed in E.coli with the flavecin synthetase FlvM2.

It localises to the secreted. Lanthionine-containing peptide that does probably not show antibacterial activity, since its analog [+7]Flvbeta.f does not show antibacterial activity against M.luteus. Also does not show antibiotic activity when tested with [Del2]Flvalpha.a, an analog of Flvalpha.a, which is encoded by the same operon than Flvbeta.f. The bactericidal activity of lantibiotics is based on depolarization of energized bacterial cytoplasmic membranes, initiated by the formation of aqueous transmembrane pores. This is Lantipeptide Flvbeta.f from Ruminococcus flavefaciens.